Reading from the N-terminus, the 720-residue chain is Putative glutamine--fructose-6-phosphate aminotransferase [isomerizing] (720 aa).

Catalysis depends on C2, which acts as the Nucleophile; for GATase activity. The Glutamine amidotransferase type-2 domain maps to C2–G321. Polar residues predominate over residues S266 to P280. Residues S266–L285 form a disordered region. 2 consecutive SIS domains span residues W393–S532 and C565–P710.

It catalyses the reaction D-fructose 6-phosphate + L-glutamine = D-glucosamine 6-phosphate + L-glutamate. Its pathway is nucleotide-sugar biosynthesis; UDP-N-acetyl-alpha-D-glucosamine biosynthesis; alpha-D-glucosamine 6-phosphate from D-fructose 6-phosphate: step 1/1. Involved in amino sugar synthesis (formation of chitin, supplies the amino sugars of asparagine-linked oligosaccharides of glycoproteins). The sequence is that of Putative glutamine--fructose-6-phosphate aminotransferase [isomerizing] from Saccharomyces cerevisiae (strain JAY291) (Baker's yeast).